The following is a 258-amino-acid chain: Acyl-[acyl-carrier-protein]--UDP-N-acetylglucosamine O-acyltransferase (258 aa).

This sequence belongs to the transferase hexapeptide repeat family. LpxA subfamily. In terms of assembly, homotrimer.

It is found in the cytoplasm. The catalysed reaction is a (3R)-hydroxyacyl-[ACP] + UDP-N-acetyl-alpha-D-glucosamine = a UDP-3-O-[(3R)-3-hydroxyacyl]-N-acetyl-alpha-D-glucosamine + holo-[ACP]. The protein operates within glycolipid biosynthesis; lipid IV(A) biosynthesis; lipid IV(A) from (3R)-3-hydroxytetradecanoyl-[acyl-carrier-protein] and UDP-N-acetyl-alpha-D-glucosamine: step 1/6. Functionally, involved in the biosynthesis of lipid A, a phosphorylated glycolipid that anchors the lipopolysaccharide to the outer membrane of the cell. The sequence is that of Acyl-[acyl-carrier-protein]--UDP-N-acetylglucosamine O-acyltransferase from Halorhodospira halophila (strain DSM 244 / SL1) (Ectothiorhodospira halophila (strain DSM 244 / SL1)).